Reading from the N-terminus, the 472-residue chain is Putative diacyglycerol O-acyltransferase MT3172 (472 aa).

His-139 functions as the Proton acceptor in the catalytic mechanism. The interval 217–238 is disordered; sequence DRRVPPTFDRSAPPGPFQRGLS.

It belongs to the long-chain O-acyltransferase family.

It catalyses the reaction an acyl-CoA + a 1,2-diacyl-sn-glycerol = a triacyl-sn-glycerol + CoA. Its pathway is glycerolipid metabolism; triacylglycerol biosynthesis. The chain is Putative diacyglycerol O-acyltransferase MT3172 from Mycobacterium tuberculosis (strain CDC 1551 / Oshkosh).